The sequence spans 213 residues: Probable aspartate aminotransferase (213 aa).

Residues Gly-47, Trp-133, and Asn-183 each contribute to the L-aspartate site.

This sequence belongs to the class-I pyridoxal-phosphate-dependent aminotransferase family. As to quaternary structure, homodimer. The cofactor is pyridoxal 5'-phosphate.

Its subcellular location is the cytoplasm. The enzyme catalyses L-aspartate + 2-oxoglutarate = oxaloacetate + L-glutamate. This chain is Probable aspartate aminotransferase (aspC), found in Streptomyces griseus.